The following is a 282-amino-acid chain: Aquaporin NIP1-1 (282 aa).

Helical transmembrane passes span 46–66 (IIAE…AVTI) and 74–94 (ITFP…VYAV). An NPA 1 motif is present at residues 103-105 (NPA). A run of 3 helical transmembrane segments spans residues 125–145 (VLAQ…MFGG), 162–182 (SLVI…GVAT), and 186–206 (AIGE…VLIA). Residues 215–217 (NPA) carry the NPA 2 motif. Residues 232-252 (IWVYVVGPVVGAVAGAWAYNL) traverse the membrane as a helical segment.

It belongs to the MIP/aquaporin (TC 1.A.8) family. NIP (TC 1.A.8.12) subfamily.

It localises to the membrane. Aquaporins facilitate the transport of water and small neutral solutes across cell membranes. The protein is Aquaporin NIP1-1 (NIP1-1) of Zea mays (Maize).